Consider the following 501-residue polypeptide: L-arabinose isomerase (501 aa).

4 residues coordinate Mn(2+): Glu-306, Glu-333, His-350, and His-449.

It belongs to the arabinose isomerase family. Mn(2+) is required as a cofactor.

It carries out the reaction beta-L-arabinopyranose = L-ribulose. Its pathway is carbohydrate degradation; L-arabinose degradation via L-ribulose; D-xylulose 5-phosphate from L-arabinose (bacterial route): step 1/3. Its function is as follows. Catalyzes the conversion of L-arabinose to L-ribulose. This chain is L-arabinose isomerase, found in Herpetosiphon aurantiacus (strain ATCC 23779 / DSM 785 / 114-95).